Consider the following 278-residue polypeptide: DNA repair protein RecO (278 aa).

Polar residues predominate over residues 1 to 12 (MGTNDALTSTED). Residues 1–41 (MGTNDALTSTEDAVTAGANDAPLPAPPEPPRKARRATSRTS) are disordered.

Belongs to the RecO family.

In terms of biological role, involved in DNA repair and RecF pathway recombination. The polypeptide is DNA repair protein RecO (Burkholderia orbicola (strain AU 1054)).